Reading from the N-terminus, the 346-residue chain is Sugar utilization regulatory protein IMP2 (346 aa).

Positions 1–29 (MQKSILLTKPDGTQSNLHSIKTETPTTVE) are enriched in polar residues. Disordered regions lie at residues 1–74 (MQKS…RVRE) and 91–132 (LRVV…DIEN). Thr24 carries the phosphothreonine modification. Residues 40-49 (RERGRSKKKR) are compositionally biased toward basic residues. A compositionally biased stretch (acidic residues) spans 96 to 132 (VDSEEEGEGNDEDDDDGDGDDMDEEESDEEQVSDIEN).

Functionally, controls the nucleo-mitochondrial dependence of galactose, maltose and raffinose utilization. Becomes essential in the absence of functioning mitochondria. This Saccharomyces cerevisiae (strain ATCC 204508 / S288c) (Baker's yeast) protein is Sugar utilization regulatory protein IMP2 (IMP2').